We begin with the raw amino-acid sequence, 414 residues long: Probable uracil permease (414 aa).

Residues 1 to 14 (MTNQIPPSLAENQS) are Cytoplasmic-facing. Residues 15–38 (KLKQSFVGLQMLFVAFGALVLVPL) traverse the membrane as a helical segment. Residues 39–42 (ITGL) are Periplasmic-facing. Residues 43-62 (DSNTALLTAGVGTLLFQFCT) traverse the membrane as a helical segment. The Cytoplasmic portion of the chain corresponds to 63–65 (GKQ). Residues 66 to 82 (VPIFLASSFAFIAPIQY) form a discontinuously helical membrane-spanning segment. Phe-74 contributes to the uracil binding site. Residues 83-91 (GVQTWGIAT) are Periplasmic-facing. A helical membrane pass occupies residues 92–112 (TMGGLAFTGLVYFALSTLVKL). Over 113 to 124 (RGAEALQRFFPP) the chain is Cytoplasmic. A helical transmembrane segment spans residues 125-146 (VVVGPVIIIIGMGLAPIAVDMS). Topologically, residues 147 to 155 (LGKNSAYAY) are periplasmic. A helical membrane pass occupies residues 156–171 (NDAVLVSMVTLLTTLS). Residues 172-178 (VAVFAKG) are Cytoplasmic-facing. Residues 179 to 199 (LMKLIPIMFGITAGYILCLFL) traverse the membrane as a helical segment. At 200–224 (GLINFQPVIDAPWFSLPKLTTPEFN) the chain is on the periplasmic side. Residues 225–248 (LEAILYMLPIAIAPAVEHVGGIMA) traverse the membrane as a helical segment. Uracil is bound at residue Glu-241. Residues 249 to 261 (ISSVTGKDFLKKP) lie on the Cytoplasmic side of the membrane. The helical transmembrane segment at 262–281 (GLHRTLLGDGIATAAASLVG) threads the bilayer. Residues 282–298 (GPPNTTYAEVTGAVMLT) traverse the membrane as a discontinuously helical segment. A uracil-binding site is contributed by Glu-290. Topologically, residues 299 to 301 (RNF) are cytoplasmic. Residues 302-319 (NPNIMTWAAVWAIAISFC) form a helical membrane-spanning segment. The Periplasmic segment spans residues 320–332 (GKVGAFLSTIPTI). A helical membrane pass occupies residues 333–354 (VMGGIMMLVFGSIAVVGMSTLI). Residues 355–365 (RGKVDVTEARN) are Cytoplasmic-facing. Residues 366 to 401 (LCIISVVMTFGIGNMFVDVGNVSLKGISLCAIVAII) constitute an intramembrane region (discontinuously helical). Residues 402 to 414 (LNLVLPKAKNEVE) lie on the Cytoplasmic side of the membrane.

It belongs to the nucleobase:cation symporter-2 (NCS2) (TC 2.A.40) family.

The protein resides in the cell inner membrane. It carries out the reaction uracil(in) + H(+)(in) = uracil(out) + H(+)(out). Its function is as follows. Transport of uracil in the cell. This is Probable uracil permease (uraA) from Haemophilus influenzae (strain ATCC 51907 / DSM 11121 / KW20 / Rd).